The sequence spans 527 residues: Cytochrome P450 monooxygenase olcJ (527 aa).

The helical transmembrane segment at glycine 21–histidine 43 threads the bilayer. A heme-binding site is contributed by cysteine 464.

This sequence belongs to the cytochrome P450 family. Heme is required as a cofactor.

It localises to the membrane. It functions in the pathway secondary metabolite biosynthesis; terpenoid biosynthesis. Its function is as follows. Cytochrome P450 monooxygenase; part of the gene cluster that mediates the biosynthesis of 15-deoxyoxalicine B. The first step of the pathway is the synthesis of nicotinyl-CoA from nicotinic acid by the nicotinic acid-CoA ligase olcI. Nicotinyl-CoA is then a substrate of polyketide synthase olcA to produce 4-hydroxy-6-(3-pyridinyl)-2H-pyran-2-one (HPPO) which is further prenylated by the polyprenyl transferase olcH to yield geranylgeranyl-HPPO. Geranylgeranyl pyrophosphate is provided by the cluster-specific geranylgeranyl pyrophosphate synthase olcC. The FAD-dependent monooxygenase olcE catalyzes the epoxidation of geranylgeranyl-HPPO and the terpene cyclase olcD catalyzes the cyclization of the terpenoid component, resulting in the formation of the tricyclic terpene moiety seen in predecaturin E. The cytochrome P450 monooxygenase then catalyzes the allylic oxidation of predecaturin E, which is followed by spirocylization with concomitant loss of one molecule of water to form decaturin E. Decaturin E is the substrate of the cytochrome P450 monooxygenase olcJ which hydroxylates it at the C-29 position to form decaturin F. The short-chain dehydrogenase/reductase olcF may catalyze the oxidation of decaturin F to generate the 29-hydroxyl-27-one intermediate, and subsequent hemiacetal formation probably leads to the formation of decaturin C. The dioxygenase olcK may be a peroxisomal enzyme that catalyzes the hydroxylation of decaturin C into decaturin A once decaturin C is shuttled into the peroxisome by the MFS transporter olcL. Finally the cytochrome P450 monooxygenase olcB catalyzes the oxidative rearrangement to yield 15-deoxyoxalicine B. In the absence of olcJ, decaturin E may be shunted to a pathway in which it is oxidized to a ketone, possibly by olcF, to form decaturin D, which undergoes further allylic oxidation to yield decaturin G. Moreover, in the absence of oclK or oclL, oclB can convert decaturin C into 15-deoxyoxalicine A. The chain is Cytochrome P450 monooxygenase olcJ from Penicillium canescens.